We begin with the raw amino-acid sequence, 516 residues long: RxLR effector protein PITG_15127 (516 aa).

The N-terminal stretch at 1–22 (MRLYSGAILCTIATLLISVSTA) is a signal peptide. Residues 48–63 (RFLRVSTQNTENGENR) carry the RxLR-dEER motif.

The protein belongs to the RxLR effector family.

It is found in the secreted. It localises to the host cell membrane. Its subcellular location is the host nucleus. The protein resides in the host cytoplasm. In terms of biological role, effector that enhances P.infestans colonization of Nicotiana benthamiana leaves. The sequence is that of RxLR effector protein PITG_15127 from Phytophthora infestans (strain T30-4) (Potato late blight agent).